Here is a 488-residue protein sequence, read N- to C-terminus: Cis-aconitate decarboxylase (488 aa).

Belongs to the PrpD family. Homodimer. As to expression, expressed in LPS-tolerized macrophages (at protein level). Expressed in the luminal epithelial cells of pregnant uterus. Expressed in microglia and macrophage cells.

It is found in the mitochondrion. The enzyme catalyses cis-aconitate + H(+) = itaconate + CO2. In terms of biological role, cis-aconitate decarboxylase that catalyzes production of itaconate and is involved in the inhibition of the inflammatory response. Acts as a negative regulator of the Toll-like receptors (TLRs)-mediated inflammatory innate response by stimulating the tumor necrosis factor alpha-induced protein TNFAIP3 expression via reactive oxygen species (ROS) in LPS-tolerized macrophages. Involved in antimicrobial response of innate immune cells; ACOD1-mediated itaconic acid production contributes to the antimicrobial activity of macrophages by generating itaconate, leading to alkylation of proteins, such as TFEB. Involved in antiviral response following infection by flavivirus in neurons: ACOD1-mediated itaconate production inhibits the activity of succinate dehydrogenase, generating a metabolic state in neurons that suppresses replication of viral genomes. Plays a role in the embryo implantation. The chain is Cis-aconitate decarboxylase from Mus musculus (Mouse).